Here is a 128-residue protein sequence, read N- to C-terminus: Large ribosomal subunit protein bL17 (128 aa).

This sequence belongs to the bacterial ribosomal protein bL17 family. Part of the 50S ribosomal subunit. Contacts protein L32.

This Vibrio cholerae serotype O1 (strain ATCC 39541 / Classical Ogawa 395 / O395) protein is Large ribosomal subunit protein bL17.